Here is a 369-residue protein sequence, read N- to C-terminus: Mitogen-activated protein kinase 11 (369 aa).

A Protein kinase domain is found at 40 to 326; that stretch reads VPPLRPIGRG…VDEALCHPYL (287 aa). Residues 46 to 54 and Lys-69 each bind ATP; that span reads IGRGASGIV. The active-site Proton acceptor is Asp-166. At Thr-198 the chain carries Phosphothreonine. Positions 198 to 200 match the TXY motif; sequence TEY. Tyr-200 is subject to Phosphotyrosine. Position 203 is a phosphothreonine (Thr-203).

This sequence belongs to the protein kinase superfamily. CMGC Ser/Thr protein kinase family. MAP kinase subfamily. In terms of assembly, interacts with MKK1, MKK2 and MKK6. Post-translationally, dually phosphorylated on Thr-198 and Tyr-200, which activates the enzyme.

The enzyme catalyses L-seryl-[protein] + ATP = O-phospho-L-seryl-[protein] + ADP + H(+). The catalysed reaction is L-threonyl-[protein] + ATP = O-phospho-L-threonyl-[protein] + ADP + H(+). Its activity is regulated as follows. Activated by threonine and tyrosine phosphorylation. This Arabidopsis thaliana (Mouse-ear cress) protein is Mitogen-activated protein kinase 11 (MPK11).